The chain runs to 177 residues: Adenine phosphoribosyltransferase (177 aa).

This sequence belongs to the purine/pyrimidine phosphoribosyltransferase family. As to quaternary structure, homodimer.

The protein resides in the cytoplasm. It carries out the reaction AMP + diphosphate = 5-phospho-alpha-D-ribose 1-diphosphate + adenine. It participates in purine metabolism; AMP biosynthesis via salvage pathway; AMP from adenine: step 1/1. Its function is as follows. Catalyzes a salvage reaction resulting in the formation of AMP, that is energically less costly than de novo synthesis. The sequence is that of Adenine phosphoribosyltransferase from Chlorobium phaeobacteroides (strain BS1).